Here is a 356-residue protein sequence, read N- to C-terminus: Cyanuric acid amidohydrolase (356 aa).

Residues 1–99 form an RU A region; it reads MPIAKVHRIA…FLVFERAEGN (99 aa). Residues arginine 52 and 79–80 each bind substrate; that span reads SG. Residues 106 to 243 form an RU B region; sequence ALAIGRAHTP…HEIVVLGMSE (138 aa). Lysine 156 is an active-site residue. Substrate contacts are provided by residues arginine 188 and 226 to 227; that span reads SS. The active-site Nucleophile is the serine 226. The RU C stretch occupies residues 249–356; sequence LAIAHGVMAD…VAVIAARTMG (108 aa). Glutamate 287 serves as a coordination point for Mg(2+). Substrate contacts are provided by residues arginine 314 and 333 to 334; that span reads SG. Glycine 336, glutamine 339, glycine 340, proline 341, and glycine 344 together coordinate Mg(2+).

This sequence belongs to the cyclic amide hydrolase (CyAH) family. In terms of assembly, homotetramer.

It catalyses the reaction cyanurate + H2O = 1-carboxybiuret + H(+). It participates in xenobiotic degradation; atrazine degradation; biuret from cyanurate: step 1/1. Inhibited by barbituric acid. Functionally, responsible for the hydrolysis of cyanuric acid, an intermediate formed during catabolism of s-triazine based compounds in herbicides such as atrazine and polymers such as melamine. Catalyzes the hydrolytic opening of the s-triazine ring of cyanuric acid (2,4,6-trihydroxy-s-triazine) to yield carbon dioxide and carboxybiuret, which spontaneously decarboxylates to biuret. This chain is Cyanuric acid amidohydrolase, found in Azorhizobium caulinodans (strain ATCC 43989 / DSM 5975 / JCM 20966 / LMG 6465 / NBRC 14845 / NCIMB 13405 / ORS 571).